A 221-amino-acid chain; its full sequence is MERTGHAFADRQRLQRALTHASARGANAGTDYERFEFLGDRVLGLVVADMLLAAFPDAAEGELSLRLNALVNAEALSEIAEHIGLPDLIRAGSDVRGLEGRKRVNLRADALESLIAVLYLDGGLEAARAFIHKYWQPRSQASGAARRDAKTELQEWAHQAASAVPAYQIDSREGPDHDPLFTVSVRVGAFQPATGSGRSKREAEQAAAAALLLREGVWNAA.

Residues Met1 to Gly123 form the RNase III domain. Mg(2+) is bound at residue Glu36. Residue Asp40 is part of the active site. 2 residues coordinate Mg(2+): Asp109 and Glu112. Residue Glu112 is part of the active site. Positions Asp148 to Val217 constitute a DRBM domain.

This sequence belongs to the ribonuclease III family. Homodimer. Mg(2+) is required as a cofactor.

The protein localises to the cytoplasm. It carries out the reaction Endonucleolytic cleavage to 5'-phosphomonoester.. Digests double-stranded RNA. Involved in the processing of primary rRNA transcript to yield the immediate precursors to the large and small rRNAs (23S and 16S). Processes some mRNAs, and tRNAs when they are encoded in the rRNA operon. Processes pre-crRNA and tracrRNA of type II CRISPR loci if present in the organism. The sequence is that of Ribonuclease 3 from Mesorhizobium japonicum (strain LMG 29417 / CECT 9101 / MAFF 303099) (Mesorhizobium loti (strain MAFF 303099)).